The sequence spans 230 residues: GTP cyclohydrolase III (230 aa).

This sequence belongs to the archaeal-type GTP cyclohydrolase family.

It carries out the reaction GTP + 3 H2O = 2-amino-5-formylamino-6-(5-phospho-D-ribosylamino)pyrimidin-4(3H)-one + 2 phosphate + 2 H(+). Functionally, catalyzes the formation of 2-amino-5-formylamino-6-ribofuranosylamino-4(3H)-pyrimidinone ribonucleotide monophosphate and inorganic phosphate from GTP. Also has an independent pyrophosphate phosphohydrolase activity. This is GTP cyclohydrolase III from Saccharolobus islandicus (strain M.14.25 / Kamchatka #1) (Sulfolobus islandicus).